Here is a 358-residue protein sequence, read N- to C-terminus: Methylthioribose-1-phosphate isomerase (358 aa).

Residues 54–56 (RGA), R96, and Q205 contribute to the substrate site. D246 functions as the Proton donor in the catalytic mechanism. A substrate-binding site is contributed by 256–257 (NK).

It belongs to the eIF-2B alpha/beta/delta subunits family. MtnA subfamily.

The enzyme catalyses 5-(methylsulfanyl)-alpha-D-ribose 1-phosphate = 5-(methylsulfanyl)-D-ribulose 1-phosphate. Its pathway is amino-acid biosynthesis; L-methionine biosynthesis via salvage pathway; L-methionine from S-methyl-5-thio-alpha-D-ribose 1-phosphate: step 1/6. In terms of biological role, catalyzes the interconversion of methylthioribose-1-phosphate (MTR-1-P) into methylthioribulose-1-phosphate (MTRu-1-P). The polypeptide is Methylthioribose-1-phosphate isomerase (Pseudomonas syringae pv. tomato (strain ATCC BAA-871 / DC3000)).